The primary structure comprises 321 residues: GTP 3',8-cyclase (321 aa).

In terms of domain architecture, Radical SAM core spans 5 to 233 (SFNRVIDYIR…QGSSKIYTLE (229 aa)). Arg-14 contacts GTP. [4Fe-4S] cluster contacts are provided by Cys-21 and Cys-25. Tyr-27 is a binding site for S-adenosyl-L-methionine. Cys-28 contributes to the [4Fe-4S] cluster binding site. Arg-64 lines the GTP pocket. Gly-68 contacts S-adenosyl-L-methionine. GTP is bound at residue Ser-95. S-adenosyl-L-methionine is bound at residue Ser-119. Lys-155 lines the GTP pocket. Position 189 (Met-189) interacts with S-adenosyl-L-methionine. The [4Fe-4S] cluster site is built by Cys-249 and Cys-252. GTP is bound at residue 254 to 256 (RIR). Residue Cys-266 coordinates [4Fe-4S] cluster.

It belongs to the radical SAM superfamily. MoaA family. Monomer and homodimer. [4Fe-4S] cluster is required as a cofactor.

The enzyme catalyses GTP + AH2 + S-adenosyl-L-methionine = (8S)-3',8-cyclo-7,8-dihydroguanosine 5'-triphosphate + 5'-deoxyadenosine + L-methionine + A + H(+). The protein operates within cofactor biosynthesis; molybdopterin biosynthesis. Catalyzes the cyclization of GTP to (8S)-3',8-cyclo-7,8-dihydroguanosine 5'-triphosphate. The sequence is that of GTP 3',8-cyclase from Helicobacter pylori (strain J99 / ATCC 700824) (Campylobacter pylori J99).